Reading from the N-terminus, the 347-residue chain is Probable replication factor C subunit 5 (347 aa).

ATP is bound at residue 64–71 (GPPGTGKT).

Belongs to the activator 1 small subunits family. Heteropentamer of various rfc subunits that forms a complex (RFC) with PCNA in the presence of ATP.

The protein resides in the nucleus. The elongation of primed DNA templates by DNA polymerase delta and epsilon requires the action of the accessory proteins PCNA and activator 1. This Dictyostelium discoideum (Social amoeba) protein is Probable replication factor C subunit 5 (rfc5).